A 100-amino-acid chain; its full sequence is Putative pterin-4-alpha-carbinolamine dehydratase (100 aa).

Belongs to the pterin-4-alpha-carbinolamine dehydratase family.

It carries out the reaction (4aS,6R)-4a-hydroxy-L-erythro-5,6,7,8-tetrahydrobiopterin = (6R)-L-erythro-6,7-dihydrobiopterin + H2O. This Allorhizobium ampelinum (strain ATCC BAA-846 / DSM 112012 / S4) (Agrobacterium vitis (strain S4)) protein is Putative pterin-4-alpha-carbinolamine dehydratase.